The following is a 309-amino-acid chain: Syndecan-1 (309 aa).

An N-terminal signal peptide occupies residues 1 to 22 (MRRAALWLWLCALALRLQPVLP). Residues 24 to 253 (IMAVNVPPED…GLLDRKEVLG (230 aa)) lie on the Extracellular side of the membrane. Disordered regions lie at residues 28–57 (NVPPEDQDGSGDDSDNFSGSGTGALPDITL) and 142–185 (ARAT…GGTS). Residues 32-42 (EDQDGSGDDSD) are compositionally biased toward acidic residues. The O-linked (Xyl...) (chondroitin sulfate) serine glycan is linked to serine 37. N-linked (GlcNAc...) asparagine glycosylation occurs at asparagine 43. Residues serine 45 and serine 47 are each glycosylated (O-linked (Xyl...) (heparan sulfate) serine). The span at 142 to 151 (ARATTAQAPV) shows a compositional bias: polar residues. Serine 205 and serine 215 each carry an O-linked (Xyl...) (chondroitin sulfate) serine glycan. A helical membrane pass occupies residues 254–274 (GVIAGGLVGLIFAVCLVGFML). At 275–309 (YRMKKKDEGSYSLEEPKQANGGAYQKPTKQEEFYA) the chain is on the cytoplasmic side. Positions 283–309 (GSYSLEEPKQANGGAYQKPTKQEEFYA) are disordered. Phosphoserine is present on serine 284.

It belongs to the syndecan proteoglycan family. Interacts with CDCP1. Interacts (via C-terminus) with TIAM1 (via PDZ domain). Interacts with MDK. Shedding is enhanced by a number of factors such as heparanase, thrombin or EGF. Also by stress and wound healing. PMA-mediated shedding is inhibited by TIMP3.

Its subcellular location is the membrane. The protein localises to the secreted. It localises to the extracellular exosome. Cell surface proteoglycan that contains both heparan sulfate and chondroitin sulfate and that links the cytoskeleton to the interstitial matrix. Regulates exosome biogenesis in concert with SDCBP and PDCD6IP. Able to induce its own expression in dental mesenchymal cells and also in the neighboring dental epithelial cells via an MSX1-mediated pathway. The protein is Syndecan-1 of Cricetulus griseus (Chinese hamster).